The sequence spans 93 residues: MTTNAVTSQSEKAYALLQADAEKIQKLIEVQLENLTMPQCPLYEEVLDTRMFGLSREIDFAIRLELVEEEKGKMILSELERKLALLHEASMRK.

It belongs to the UPF0358 family.

The chain is UPF0358 protein ABC2396 from Shouchella clausii (strain KSM-K16) (Alkalihalobacillus clausii).